The chain runs to 367 residues: Probable butyrate kinase (367 aa).

Belongs to the acetokinase family.

It localises to the cytoplasm. The enzyme catalyses butanoate + ATP = butanoyl phosphate + ADP. The protein is Probable butyrate kinase of Bacillus cereus (strain ZK / E33L).